A 126-amino-acid polypeptide reads, in one-letter code: Alpha-lactalbumin (126 aa).

Residues 1–126 (KVFEKCELSQ…CIADLDQWKC (126 aa)) enclose the C-type lysozyme domain. Intrachain disulfides connect Cys6/Cys126, Cys30/Cys117, Cys63/Cys82, and Cys78/Cys96. Asn47 carries N-linked (GlcNAc...) asparagine glycosylation. Ca(2+)-binding residues include Lys84, Asp87, Asp89, Asp92, and Asp93.

The protein belongs to the glycosyl hydrolase 22 family. In terms of assembly, lactose synthase (LS) is a heterodimer of a catalytic component, beta1,4-galactosyltransferase (beta4Gal-T1) and a regulatory component, alpha-lactalbumin (LA). Mammary gland specific. Secreted in milk.

Its subcellular location is the secreted. In terms of biological role, regulatory subunit of lactose synthase, changes the substrate specificity of galactosyltransferase in the mammary gland making glucose a good acceptor substrate for this enzyme. This enables LS to synthesize lactose, the major carbohydrate component of milk. In other tissues, galactosyltransferase transfers galactose onto the N-acetylglucosamine of the oligosaccharide chains in glycoproteins. In Tachyglossus aculeatus aculeatus (Southeast Australian short-beaked echidna), this protein is Alpha-lactalbumin (LALBA).